Reading from the N-terminus, the 178-residue chain is Protein GrpE (178 aa).

It belongs to the GrpE family. As to quaternary structure, homodimer.

It is found in the cytoplasm. Participates actively in the response to hyperosmotic and heat shock by preventing the aggregation of stress-denatured proteins, in association with DnaK and GrpE. It is the nucleotide exchange factor for DnaK and may function as a thermosensor. Unfolded proteins bind initially to DnaJ; upon interaction with the DnaJ-bound protein, DnaK hydrolyzes its bound ATP, resulting in the formation of a stable complex. GrpE releases ADP from DnaK; ATP binding to DnaK triggers the release of the substrate protein, thus completing the reaction cycle. Several rounds of ATP-dependent interactions between DnaJ, DnaK and GrpE are required for fully efficient folding. The polypeptide is Protein GrpE (Rickettsia africae (strain ESF-5)).